The sequence spans 240 residues: Epoxyqueuosine reductase QueH (240 aa).

[4Fe-4S] cluster-binding residues include Cys-43, Cys-44, Cys-129, and Cys-132. Cys-211 and Cys-213 are disulfide-bonded.

Belongs to the QueH family.

The catalysed reaction is epoxyqueuosine(34) in tRNA + AH2 = queuosine(34) in tRNA + A + H2O. It functions in the pathway tRNA modification; tRNA-queuosine biosynthesis. In terms of biological role, catalyzes the conversion of epoxyqueuosine (oQ) to queuosine (Q), which is a hypermodified base found in the wobble positions of tRNA(Asp), tRNA(Asn), tRNA(His) and tRNA(Tyr). The chain is Epoxyqueuosine reductase QueH from Staphylococcus aureus (strain Mu50 / ATCC 700699).